Reading from the N-terminus, the 146-residue chain is Leghemoglobin 2 (146 aa).

The Globin domain maps to 2-146 (GFTAQQDALV…LAAAIKKAMS (145 aa)). Position 30 is a nitrated tyrosine (tyrosine 30). Serine 45 contacts heme b. Phosphoserine is present on serine 45. An O2-binding site is contributed by histidine 61. Positions 64, 93, and 96 each coordinate heme b. Tyrosine 134 carries the nitrated tyrosine modification.

Belongs to the plant globin family. In terms of assembly, monomer. In terms of processing, nitrated in effective nodules and particularly in hypoxic conditions; this mechanism may play a protective role in the symbiosis by buffering toxic peroxynitrite NO(2)(-). Nitration level decrease during nodule senescence. Phosphorylation at Ser-45 disrupts the molecular environment of its porphyrin ring oxygen binding pocket, thus leading to a reduced oxygen consumption and to the delivery of oxygen O(2) to symbiosomes. As to expression, specifically and strongly expressed in root nodules and at low levels in seedlings.

The protein resides in the cytoplasm. Its subcellular location is the cytosol. It localises to the nucleus. Its function is as follows. Leghemoglobin that reversibly binds oxygen O(2) through a pentacoordinated heme iron. In root nodules, facilitates the diffusion of oxygen to the bacteroids while preventing the bacterial nitrogenase from being inactivated by buffering dioxygen, nitric oxide and carbon monoxide, and promoting the formation of reactive oxygen species (ROS, e.g. H(2)O(2)). This role is essential for symbiotic nitrogen fixation (SNF). This Lotus japonicus (Lotus corniculatus var. japonicus) protein is Leghemoglobin 2.